Here is a 95-residue protein sequence, read N- to C-terminus: Small ribosomal subunit protein uS15 (95 aa).

This sequence belongs to the universal ribosomal protein uS15 family. In terms of assembly, part of the 30S ribosomal subunit. Forms a bridge to the 50S subunit in the 70S ribosome, contacting the 23S rRNA.

Functionally, one of the primary rRNA binding proteins, it binds directly to 16S rRNA where it helps nucleate assembly of the platform of the 30S subunit by binding and bridging several RNA helices of the 16S rRNA. Forms an intersubunit bridge (bridge B4) with the 23S rRNA of the 50S subunit in the ribosome. The protein is Small ribosomal subunit protein uS15 of Sulfurihydrogenibium sp. (strain YO3AOP1).